A 715-amino-acid polypeptide reads, in one-letter code: Fatty acid oxidation complex subunit alpha (715 aa).

Residues Met1–Pro190 form an enoyl-CoA hydratase region. Residues Gly306–Asn715 form a 3-hydroxyacyl-CoA dehydrogenase region.

The protein in the N-terminal section; belongs to the enoyl-CoA hydratase/isomerase family. It in the central section; belongs to the 3-hydroxyacyl-CoA dehydrogenase family. As to quaternary structure, heterotetramer of two alpha chains (FadJ) and two beta chains (FadI).

It is found in the cytoplasm. It catalyses the reaction a (3S)-3-hydroxyacyl-CoA = a (2E)-enoyl-CoA + H2O. The enzyme catalyses a 4-saturated-(3S)-3-hydroxyacyl-CoA = a (3E)-enoyl-CoA + H2O. The catalysed reaction is a (3S)-3-hydroxyacyl-CoA + NAD(+) = a 3-oxoacyl-CoA + NADH + H(+). It carries out the reaction (3S)-3-hydroxybutanoyl-CoA = (3R)-3-hydroxybutanoyl-CoA. It participates in lipid metabolism; fatty acid beta-oxidation. Catalyzes the formation of a hydroxyacyl-CoA by addition of water on enoyl-CoA. Also exhibits 3-hydroxyacyl-CoA epimerase and 3-hydroxyacyl-CoA dehydrogenase activities. This Salmonella dublin (strain CT_02021853) protein is Fatty acid oxidation complex subunit alpha.